The sequence spans 237 residues: Ribitol-5-phosphate cytidylyltransferase (237 aa).

CTP-binding positions include 7–10, 81–87, and serine 112; these read LAGG and GSDRNES.

The protein belongs to the IspD/TarI cytidylyltransferase family. TarI subfamily.

It carries out the reaction D-ribitol 5-phosphate + CTP + H(+) = CDP-L-ribitol + diphosphate. The protein operates within cell wall biogenesis; poly(ribitol phosphate) teichoic acid biosynthesis. Catalyzes the transfer of the cytidylyl group of CTP to D-ribitol 5-phosphate. In Bacillus spizizenii (strain ATCC 23059 / NRRL B-14472 / W23) (Bacillus subtilis subsp. spizizenii), this protein is Ribitol-5-phosphate cytidylyltransferase.